The following is a 427-amino-acid chain: Enolase (427 aa).

Gln163 is a (2R)-2-phosphoglycerate binding site. The Proton donor role is filled by Glu205. Positions 242, 285, and 312 each coordinate Mg(2+). 4 residues coordinate (2R)-2-phosphoglycerate: Lys337, Arg366, Ser367, and Lys388. The Proton acceptor role is filled by Lys337.

Belongs to the enolase family. The cofactor is Mg(2+).

It is found in the cytoplasm. The protein localises to the secreted. It localises to the cell surface. The enzyme catalyses (2R)-2-phosphoglycerate = phosphoenolpyruvate + H2O. It participates in carbohydrate degradation; glycolysis; pyruvate from D-glyceraldehyde 3-phosphate: step 4/5. Its function is as follows. Catalyzes the reversible conversion of 2-phosphoglycerate (2-PG) into phosphoenolpyruvate (PEP). It is essential for the degradation of carbohydrates via glycolysis. This is Enolase from Dechloromonas aromatica (strain RCB).